The sequence spans 156 residues: UPF0266 membrane protein YobD (156 aa).

Topologically, residues 1-5 (MTITD) are periplasmic. The chain crosses the membrane as a helical span at residues 6 to 26 (LVLILFIAALLAYALYDQFIM). At 27–44 (PRRNGPTLLSIALLRRGR) the chain is on the cytoplasmic side. A helical membrane pass occupies residues 45-65 (VDSVIFVGLVAILIYNNVTSH). Position 66 (Gly66) is a topological domain, periplasmic. The helical transmembrane segment at 67-87 (AQMTTWLLSALALMGFYIFWI) threads the bilayer. Residues 88–156 (RTPRIIFKQR…LLIENQYLKI (69 aa)) are Cytoplasmic-facing.

Belongs to the UPF0266 family.

Its subcellular location is the cell inner membrane. The polypeptide is UPF0266 membrane protein YobD (yobD) (Salmonella typhimurium (strain LT2 / SGSC1412 / ATCC 700720)).